The primary structure comprises 143 residues: Zinc-containing ferredoxin (143 aa).

The N-terminal extension stretch occupies residues 13-60 (PIDEHFLENDKDYPVTGQHNGHDVRAEGMQRLDADGKPYPTKLGIHGT). The Zn(2+) site is built by histidine 31, histidine 34, and histidine 58. 4Fe-4S ferredoxin-type domains follow at residues 60-89 (THVA…WNLN) and 115-143 (KCDP…KITP). [3Fe-4S] cluster-binding residues include cysteine 69 and cysteine 75. [4Fe-4S] cluster is bound at residue cysteine 79. Aspartate 117 is a Zn(2+) binding site. [4Fe-4S] cluster contacts are provided by cysteine 124, cysteine 127, and cysteine 130. [3Fe-4S] cluster is bound at residue cysteine 134.

[3Fe-4S] cluster serves as cofactor. [4Fe-4S] cluster is required as a cofactor. Requires Zn(2+) as cofactor.

Functionally, ferredoxins are iron-sulfur proteins that transfer electrons in a wide variety of metabolic reactions. The sequence is that of Zinc-containing ferredoxin (zfx) from Thermoplasma acidophilum (strain ATCC 25905 / DSM 1728 / JCM 9062 / NBRC 15155 / AMRC-C165).